Reading from the N-terminus, the 453-residue chain is Signal recognition particle protein (453 aa).

Residues 107 to 114 (GLQGAGKT), 190 to 194 (DTAGR), and 248 to 251 (TKVD) contribute to the GTP site.

This sequence belongs to the GTP-binding SRP family. SRP54 subfamily. Part of the signal recognition particle protein translocation system, which is composed of SRP and FtsY. SRP is a ribonucleoprotein composed of Ffh and a 4.5S RNA molecule.

The protein localises to the cytoplasm. It carries out the reaction GTP + H2O = GDP + phosphate + H(+). Functionally, involved in targeting and insertion of nascent membrane proteins into the cytoplasmic membrane. Binds to the hydrophobic signal sequence of the ribosome-nascent chain (RNC) as it emerges from the ribosomes. The SRP-RNC complex is then targeted to the cytoplasmic membrane where it interacts with the SRP receptor FtsY. Interaction with FtsY leads to the transfer of the RNC complex to the Sec translocase for insertion into the membrane, the hydrolysis of GTP by both Ffh and FtsY, and the dissociation of the SRP-FtsY complex into the individual components. The sequence is that of Signal recognition particle protein from Escherichia coli O157:H7.